We begin with the raw amino-acid sequence, 246 residues long: Receptor-transporting protein 4 (246 aa).

Residues 1–224 (MVVDFWTWEQ…EKLGPSRDPD (224 aa)) lie on the Cytoplasmic side of the membrane. The segment at 48 to 159 (RAFGWFRCSS…DTANCEACTL (112 aa)) adopts a 3CxxC-type zinc-finger fold. The helical transmembrane segment at 225–245 (PLNICVFILLLVFIVVKCFTS) threads the bilayer.

It belongs to the TMEM7 family. Interacts with TASR16. Interacts with OPRD1 and OPRM1; the interaction promotes cell surface localization of the OPDR1-OPRM1 heterodimer. In terms of assembly, (Microbial infection) Interacts with influenza A virus protein NS1; this interaction sequesters NS1 from interacting with RIG-I/DDX58 to restore antiviral signaling. In terms of tissue distribution, expressed in circumvallate papillae and testis.

It is found in the membrane. The protein resides in the cytoplasm. Chaperone protein that facilitates the trafficking and functional cell surface expression of some G-protein coupled receptors (GPCRs). Promotes functional expression of the bitter taste receptor TAS2R16. Also promotes functional expression of the opioid receptor heterodimer OPRD1-OPRM1. In addition, acts as a potent IFN-inducible suppressor of pathogens including lyssavirus rabies, influenza A or yellow fever virus. Mechanistically, associates with the viral replicase, binds viral RNA, and thereby suppresses viral genome amplification that replicates at the endoplasmic reticulum. In addition, restores antiviral signaling by interacting with and sequestering influenza A virus protein NS1. The polypeptide is Receptor-transporting protein 4 (RTP4) (Homo sapiens (Human)).